The sequence spans 296 residues: MFS-type transporter pytF (296 aa).

7 helical membrane passes run 30–50 (WLVV…LNSF), 72–92 (WIGS…GPVF), 98–118 (KVLF…VSLC), 124–144 (FILA…YPTI), 157–177 (LAMG…PLIL), 180–200 (LFAV…SFAL), and 238–258 (VVGM…IPLF). The N-linked (GlcNAc...) asparagine glycan is linked to Asn-265. The chain crosses the membrane as a helical span at residues 271-291 (SLISILNAGSFVGRIVSGALA).

The protein belongs to the major facilitator superfamily. Monocarboxylate porter (TC 2.A.1.13) family.

Its subcellular location is the cell membrane. Functionally, MFS-type transporter; part of the gene cluster that mediates the biosynthesis of pyranterreones, a family of antioxidative compounds. Directly involved in the secretion of pyranterreones. The chain is MFS-type transporter pytF from Aspergillus terreus (strain NIH 2624 / FGSC A1156).